Consider the following 385-residue polypeptide: Deoxyguanosinetriphosphate triphosphohydrolase-like protein (385 aa).

The HD domain maps to 62–197 (RLTHSLEVAQ…VSLADDIAYS (136 aa)).

The protein belongs to the dGTPase family. Type 2 subfamily.

The polypeptide is Deoxyguanosinetriphosphate triphosphohydrolase-like protein (Neorickettsia sennetsu (strain ATCC VR-367 / Miyayama) (Ehrlichia sennetsu)).